We begin with the raw amino-acid sequence, 266 residues long: MDTFQVIILALIQGLTEFLPISSSAHLILPAQLLGWEDQGLSFDVAVNTGSLLAVVMYFRREILSMFTAWTGSVVSRKQTDESKLAWWIILATIPAVIIGFSAKDFIETHFRSIEVIAATTIIFGLLLWWADKMQRQGLNEFQVGWKKALVIGIAQAMALIPGTSRSGATITAALMLGLSREAAARFSFLMSVPVSLGAAILVTKDLLSSGQVIDYQALGLGILVSFIAAYICIHYFLKIISKMGMTPFVIYRLALGAVLCWIIFL.

Helical transmembrane passes span 1 to 21, 39 to 59, 87 to 107, 111 to 131, 144 to 164, 183 to 203, 218 to 238, and 246 to 266; these read MDTF…FLPI, QGLS…VMYF, WWII…KDFI, FRSI…LWWA, VGWK…IPGT, AAAR…AILV, ALGL…HYFL, and MTPF…IIFL.

The protein belongs to the UppP family.

It localises to the cell inner membrane. It carries out the reaction di-trans,octa-cis-undecaprenyl diphosphate + H2O = di-trans,octa-cis-undecaprenyl phosphate + phosphate + H(+). Its function is as follows. Catalyzes the dephosphorylation of undecaprenyl diphosphate (UPP). Confers resistance to bacitracin. This is Undecaprenyl-diphosphatase from Shewanella pealeana (strain ATCC 700345 / ANG-SQ1).